A 504-amino-acid polypeptide reads, in one-letter code: Dihydrolipoamide dehydrogenase (504 aa).

Residues 1–34 (MLSQRLIGRTAVKSAFRPSGLPTVVNASRWRRGY) constitute a mitochondrion transit peptide. Residues 69-78 (EKRGTLGGTC), Lys-87, Gly-151, and 180-182 (TGS) each bind FAD. Cys-78 and Cys-83 form a disulfide bridge. NAD(+) is bound by residues 217 to 224 (GGGIIGLE), Glu-240, Val-275, and Gly-310. FAD contacts are provided by residues Asp-351 and 357 to 360 (MLAH). The active-site Proton acceptor is His-483.

The protein belongs to the class-I pyridine nucleotide-disulfide oxidoreductase family. In terms of assembly, eukaryotic pyruvate dehydrogenase (PDH) complexes are organized as a core consisting of the oligomeric dihydrolipoamide acetyl-transferase (E2), around which are arranged multiple copies of pyruvate dehydrogenase (E1), dihydrolipoamide dehydrogenase (E3) and protein X (E3BP) bound by non-covalent bonds. The Chaetomium thermophilum PDH complex contains 60 E2 units, 12 E3BP units, about 20 E1 units, and 12 or more E3 units. The units are organized in 1 E2 60-mer, 4 E3BP trimers, about 20 E1 tetramers, and a maximum of 12 E3 dimers. The E3BP trimers are bound inside the icosahedral core with tetrahedral symmetry. The cofactor is FAD.

The protein localises to the mitochondrion. It catalyses the reaction N(6)-[(R)-dihydrolipoyl]-L-lysyl-[protein] + NAD(+) = N(6)-[(R)-lipoyl]-L-lysyl-[protein] + NADH + H(+). In terms of biological role, lipoamide dehydrogenase is a component of the alpha-ketoacid dehydrogenase complexes. This includes the pyruvate dehydrogenase complex, which catalyzes the overall conversion of pyruvate to acetyl-CoA and CO(2). Also acts as a component of the glycine cleavage system (glycine decarboxylase complex), which catalyzes the degradation of glycine. The 10-megadalton pyruvate dehydrogenase complex contains multiple copies of three enzymatic components: pyruvate dehydrogenase (E1), dihydrolipoamide acetyltransferase (E2) and lipoamide dehydrogenase (E3) and catalyzes the overall oxidative decarboxylation of pyruvate to form acetyl-CoA and CO(2). Within the complex, pyruvate and thiamine pyrophosphate (TPP or vitamin B1) are bound by pyruvate dehydrogenase E1 subunits alpha and beta and pyruvate is decarboxylated leading to the 2-carbon hydrohyethyl bound to TPP. The E2 component contains covalently-bound lipoyl cofactors and transfers the hydroxyethyl group from TPP to an oxidized form of covalently bound lipoamide, and the resulting acetyl group is then transferred to free coenzyme A to form acetyl-CoA and reduced dihydrolipoamide-E2. Finally, the flavoprotein dihydrolipoamide dehydrogenase (E3) re-oxidizes the lipoyl group of dihydrolipoamide-E2 to form lipoamide-E2 and NADH. A fourth subunit, E3BP, is responsible for tethering E3 in proximity to the core, forming the entire metabolon. The chain is Dihydrolipoamide dehydrogenase from Chaetomium thermophilum (strain DSM 1495 / CBS 144.50 / IMI 039719) (Thermochaetoides thermophila).